The following is a 351-amino-acid chain: Signal recognition particle receptor FtsY (351 aa).

GTP contacts are provided by residues glycine 152–threonine 159, aspartate 235–arginine 239, and threonine 299–aspartate 302.

This sequence belongs to the GTP-binding SRP family. FtsY subfamily. As to quaternary structure, part of the signal recognition particle protein translocation system, which is composed of SRP and FtsY.

It localises to the cell membrane. The protein localises to the cytoplasm. The catalysed reaction is GTP + H2O = GDP + phosphate + H(+). Its function is as follows. Involved in targeting and insertion of nascent membrane proteins into the cytoplasmic membrane. Acts as a receptor for the complex formed by the signal recognition particle (SRP) and the ribosome-nascent chain (RNC). In Metamycoplasma hominis (strain ATCC 23114 / DSM 25592 / NBRC 14850 / NCTC 10111 / PG21) (Mycoplasma hominis), this protein is Signal recognition particle receptor FtsY.